The primary structure comprises 452 residues: Na(+)/H(+) antiporter NhaA (452 aa).

11 helical membrane passes run 27-47, 78-98, 114-134, 141-161, 172-192, 201-221, 222-242, 316-336, 346-366, 388-408, and 421-441; these read FLHI…TALI, LHFW…GMEI, ILPI…YLSF, IYGW…ILAL, IILL…IAFF, GLAI…ISFA, SAWL…VTGI, PWVA…VSFA, FLIV…GILA, ILLI…VSML, and IGVL…GLIY.

The protein belongs to the NhaA Na(+)/H(+) (TC 2.A.33) antiporter family.

It is found in the cell inner membrane. It carries out the reaction Na(+)(in) + 2 H(+)(out) = Na(+)(out) + 2 H(+)(in). Functionally, na(+)/H(+) antiporter that extrudes sodium in exchange for external protons. The sequence is that of Na(+)/H(+) antiporter NhaA from Bartonella bacilliformis (strain ATCC 35685 / KC583 / Herrer 020/F12,63).